Reading from the N-terminus, the 372-residue chain is tRNA 2-selenouridine synthase (372 aa).

A Rhodanese domain is found at 19-142; that stretch reads LASGHPIMDV…MRQYLIDTID (124 aa). C102 acts as the S-selanylcysteine intermediate in catalysis.

This sequence belongs to the SelU family. As to quaternary structure, monomer.

The catalysed reaction is 5-methylaminomethyl-2-thiouridine(34) in tRNA + selenophosphate + (2E)-geranyl diphosphate + H2O + H(+) = 5-methylaminomethyl-2-selenouridine(34) in tRNA + (2E)-thiogeraniol + phosphate + diphosphate. It catalyses the reaction 5-methylaminomethyl-2-thiouridine(34) in tRNA + (2E)-geranyl diphosphate = 5-methylaminomethyl-S-(2E)-geranyl-thiouridine(34) in tRNA + diphosphate. The enzyme catalyses 5-methylaminomethyl-S-(2E)-geranyl-thiouridine(34) in tRNA + selenophosphate + H(+) = 5-methylaminomethyl-2-(Se-phospho)selenouridine(34) in tRNA + (2E)-thiogeraniol. It carries out the reaction 5-methylaminomethyl-2-(Se-phospho)selenouridine(34) in tRNA + H2O = 5-methylaminomethyl-2-selenouridine(34) in tRNA + phosphate. Functionally, involved in the post-transcriptional modification of the uridine at the wobble position (U34) of tRNA(Lys), tRNA(Glu) and tRNA(Gln). Catalyzes the conversion of 2-thiouridine (S2U-RNA) to 2-selenouridine (Se2U-RNA). Acts in a two-step process involving geranylation of 2-thiouridine (S2U) to S-geranyl-2-thiouridine (geS2U) and subsequent selenation of the latter derivative to 2-selenouridine (Se2U) in the tRNA chain. In Shewanella loihica (strain ATCC BAA-1088 / PV-4), this protein is tRNA 2-selenouridine synthase.